We begin with the raw amino-acid sequence, 320 residues long: Dual oxidase maturation factor 2 (320 aa).

The chain crosses the membrane as a helical span at residues 22–42; sequence VPLLIVILVFLSLAASFLFIL. Over 43–51 the chain is Cytoplasmic; that stretch reads PGIRGHSRW. The chain crosses the membrane as a helical span at residues 52–72; the sequence is FWLVRVLLSLFIGAEIVAVHF. At 73 to 183 the chain is on the extracellular side; that stretch reads SGDWFVGRVW…HLAGHYAAAT (111 aa). N-linked (GlcNAc...) asparagine glycosylation is found at Asn-84, Asn-109, and Asn-121. Residues 184-204 form a helical membrane-spanning segment; it reads LWVAFCFWIIANALLSMPAPL. At 205–206 the chain is on the cytoplasmic side; the sequence is YG. A helical transmembrane segment spans residues 207 to 227; sequence GLALLTTGAFTLFGVFAFASI. Topologically, residues 228–249 are extracellular; that stretch reads SSVPLCHFRLGSAVLTPYYGAS. Residues 250–270 traverse the membrane as a helical segment; that stretch reads FWLTLATGILSLLLGGAVVIL. The Cytoplasmic portion of the chain corresponds to 271-320; that stretch reads HYTRPSALRSFLDLSVKDCSNQAKGNSPLTLNNPQHEQLKSPDLNITTLL.

The protein belongs to the DUOXA family. Heterodimer with DUXA2; disulfide-linked. Interacts with CSNK1G2. Post-translationally, N-glycosylated.

Its subcellular location is the endoplasmic reticulum membrane. Its function is as follows. Required for the maturation and the transport from the endoplasmic reticulum to the plasma membrane of functional DUOX2. May play a role in thyroid hormone synthesis. The polypeptide is Dual oxidase maturation factor 2 (Duoxa2) (Mus musculus (Mouse)).